Consider the following 185-residue polypeptide: Ribosome-recycling factor (185 aa).

The protein belongs to the RRF family.

The protein resides in the cytoplasm. In terms of biological role, responsible for the release of ribosomes from messenger RNA at the termination of protein biosynthesis. May increase the efficiency of translation by recycling ribosomes from one round of translation to another. The polypeptide is Ribosome-recycling factor (Pseudarthrobacter chlorophenolicus (strain ATCC 700700 / DSM 12829 / CIP 107037 / JCM 12360 / KCTC 9906 / NCIMB 13794 / A6) (Arthrobacter chlorophenolicus)).